A 707-amino-acid chain; its full sequence is Eomesodermin homolog (707 aa).

Residues 27 to 42 (GGGGGGGGGGGGGGGS) are compositionally biased toward gly residues. A disordered region spans residues 27 to 125 (GGGGGGGGGG…GSPCAEEELP (99 aa)). Over residues 73 to 93 (AGSAEPAGAGAGAPAAMLSDA) the composition is skewed to low complexity. Residue Ser117 is modified to Phosphoserine. The segment at residues 278-458 (LWLKFHRHQT…HNPFAKGFRD (181 aa)) is a DNA-binding region (T-box). At Thr473 the chain carries Phosphothreonine. A required for transcription activation region spans residues 592-707 (AMAGWGGRGA…GAYYAFYTSP (116 aa)). The interval 642-689 (TPPSIKSLDSSDSGVYNSACKRKRLSPSTPSNGNSPPIKCEDINTEEY) is disordered. Positions 648–657 (SLDSSDSGVY) are enriched in polar residues. Over residues 667-678 (SPSTPSNGNSPP) the composition is skewed to low complexity. Basic and acidic residues predominate over residues 680 to 689 (KCEDINTEEY).

In terms of tissue distribution, expressed in CD8+ T-cells.

The protein localises to the nucleus. Functions as a transcriptional activator playing a crucial role during development. Functions in trophoblast differentiation and later in gastrulation, regulating both mesoderm delamination and endoderm specification. Plays a role in brain development being required for the specification and the proliferation of the intermediate progenitor cells and their progeny in the cerebral cortex. Required for differentiation and migration of unipolar dendritic brush cells. Also involved in the differentiation of CD8+ T-cells during immune response regulating the expression of lytic effector genes. This is Eomesodermin homolog (Eomes) from Mus musculus (Mouse).